We begin with the raw amino-acid sequence, 390 residues long: Trehalose-phosphate phosphatase (390 aa).

The active-site Nucleophile is the D150. D150, D152, and D333 together coordinate Mg(2+). 150 to 152 (DFD) contacts substrate.

It belongs to the trehalose phosphatase family. Mg(2+) serves as cofactor.

It carries out the reaction alpha,alpha-trehalose 6-phosphate + H2O = alpha,alpha-trehalose + phosphate. It functions in the pathway glycan biosynthesis; trehalose biosynthesis. Removes the phosphate from trehalose 6-phosphate to produce free trehalose. This chain is Trehalose-phosphate phosphatase (otsB), found in Mycobacterium marinum (strain ATCC BAA-535 / M).